We begin with the raw amino-acid sequence, 369 residues long: 1-aminocyclopropane-1-carboxylate oxidase homolog 3 (369 aa).

Residues Lys217–Gly318 form the Fe2OG dioxygenase domain. Residues His241, Asp243, and His297 each coordinate Fe cation.

The protein belongs to the iron/ascorbate-dependent oxidoreductase family. Fe cation is required as a cofactor.

This is 1-aminocyclopropane-1-carboxylate oxidase homolog 3 from Arabidopsis thaliana (Mouse-ear cress).